The sequence spans 96 residues: Large ribosomal subunit protein uL15 (96 aa).

The protein belongs to the universal ribosomal protein uL15 family. In terms of assembly, part of the 50S ribosomal subunit.

Its function is as follows. Binds to the 23S rRNA. The polypeptide is Large ribosomal subunit protein uL15 (rplO) (Streptomyces scabiei).